A 99-amino-acid chain; its full sequence is Integration host factor subunit alpha (99 aa).

This sequence belongs to the bacterial histone-like protein family. In terms of assembly, heterodimer of an alpha and a beta chain.

This protein is one of the two subunits of integration host factor, a specific DNA-binding protein that functions in genetic recombination as well as in transcriptional and translational control. In Xylella fastidiosa (strain 9a5c), this protein is Integration host factor subunit alpha (ihfA).